The primary structure comprises 83 residues: MQLKIQLLMLVLMIVLTDVYSKDGFIVSKKNCLYRCSQSDERGFCNAVCLRYDADSGYCRTGKCWCDGLPQKANIAMKNKNYC.

An N-terminal signal peptide occupies residues 1–21 (MQLKIQLLMLVLMIVLTDVYS). The LCN-type CS-alpha/beta domain maps to 22–83 (KDGFIVSKKN…NIAMKNKNYC (62 aa)). Disulfide bonds link Cys-32-Cys-83, Cys-36-Cys-59, Cys-45-Cys-64, and Cys-49-Cys-66.

It belongs to the long (4 C-C) scorpion toxin superfamily. Sodium channel inhibitor family. Alpha subfamily. Expressed by the venom gland.

The protein localises to the secreted. Its function is as follows. Binds voltage-independently at site-3 of voltage-gated sodium channels (Nav) and inhibits the inactivation of the activated channels, thereby blocking neuronal transmission. The polypeptide is Neurotoxin LmNaTx3 (Lychas mucronatus (Chinese swimming scorpion)).